A 216-amino-acid chain; its full sequence is Transmembrane emp24 domain-containing protein eca (216 aa).

The N-terminal stretch at 1 to 20 (MRNQFICVALLLCALNSACG) is a signal peptide. Residues 21 to 183 (LYFHISETER…RHTSESTNSR (163 aa)) are Lumenal-facing. Positions 30–126 (RKCFIEEVPD…QLRVHLDIQV (97 aa)) constitute a GOLD domain. A coiled-coil region spans residues 134-164 (ANVAQKEKLTELQLRIRQLLDQVDQITKEQN). The helical transmembrane segment at 184-203 (VLWWSLAQTVVLVCMGFWQM) threads the bilayer. The Cytoplasmic segment spans residues 204 to 216 (RHLKSFFEAKKLV). Positions 213–216 (KKLV) match the Prevents secretion from ER motif.

Belongs to the EMP24/GP25L family.

The protein localises to the endoplasmic reticulum membrane. In terms of biological role, eca and bai are essential, though not redundant, for dorsoventral patterning of the embryo. Specifically required during early embryogenesis for the activity of maternal tkv, while the zygotic tkv is not affected. Involved in Golgi organization. The protein is Transmembrane emp24 domain-containing protein eca of Drosophila willistoni (Fruit fly).